The sequence spans 150 residues: MAEETPVFQIQRVYLKDLSLEQPNSPAILLEQEQPSVDIQLGVEATPVVEGIFEVAVTATVQTKIKDKTVFLVEAKQAGIFEIRNVPEDQMGAIIGIACPQIIYPYLRGNVADTVTRAGFPPVHLAEINFQAMYEQQQAAAAEAATSTAQ.

Belongs to the SecB family. In terms of assembly, homotetramer, a dimer of dimers. One homotetramer interacts with 1 SecA dimer.

The protein resides in the cytoplasm. Its function is as follows. One of the proteins required for the normal export of preproteins out of the cell cytoplasm. It is a molecular chaperone that binds to a subset of precursor proteins, maintaining them in a translocation-competent state. It also specifically binds to its receptor SecA. This Acidovorax ebreus (strain TPSY) (Diaphorobacter sp. (strain TPSY)) protein is Protein-export protein SecB.